We begin with the raw amino-acid sequence, 453 residues long: Pup--protein ligase (453 aa).

Glu9 contributes to the Mg(2+) binding site. Position 53 (Arg53) interacts with ATP. Tyr55 is a binding site for Mg(2+). Catalysis depends on Asp57, which acts as the Proton acceptor. Position 63 (Glu63) interacts with Mg(2+). Thr66 and Trp420 together coordinate ATP.

Belongs to the Pup ligase/Pup deamidase family. Pup-conjugating enzyme subfamily.

The catalysed reaction is ATP + [prokaryotic ubiquitin-like protein]-L-glutamate + [protein]-L-lysine = ADP + phosphate + N(6)-([prokaryotic ubiquitin-like protein]-gamma-L-glutamyl)-[protein]-L-lysine.. It participates in protein degradation; proteasomal Pup-dependent pathway. Its pathway is protein modification; protein pupylation. Functionally, catalyzes the covalent attachment of the prokaryotic ubiquitin-like protein modifier Pup to the proteasomal substrate proteins, thereby targeting them for proteasomal degradation. This tagging system is termed pupylation. The ligation reaction involves the side-chain carboxylate of the C-terminal glutamate of Pup and the side-chain amino group of a substrate lysine. The protein is Pup--protein ligase of Streptomyces coelicolor (strain ATCC BAA-471 / A3(2) / M145).